The following is a 51-amino-acid chain: uncharacterized protein (51 aa).

This is an uncharacterized protein from Rickettsia conorii (strain ATCC VR-613 / Malish 7).